A 580-amino-acid polypeptide reads, in one-letter code: Efflux pump dotC (580 aa).

The span at 1–34 shows a compositional bias: basic and acidic residues; it reads MSEDHTKADNLSEKDPHSPERSDSSSHEDAHARE. A disordered region spans residues 1-45; sequence MSEDHTKADNLSEKDPHSPERSDSSSHEDAHAREEEESSDDDGAL. Residue Asn10 is glycosylated (N-linked (GlcNAc...) asparagine). A compositionally biased stretch (acidic residues) spans 35 to 44; sequence EEESSDDDGA. The chain crosses the membrane as a helical span at residues 49-69; it reads PASLIAIVMIALSLAVFLSAL. N-linked (GlcNAc...) asparagine glycosylation occurs at Asn86. The next 13 membrane-spanning stretches (helical) occupy residues 89–109, 127–147, 153–173, 181–201, 209–229, 242–262, 275–295, 318–338, 348–368, 380–400, 409–429, 444–466, and 519–539; these read AAYT…TPIW, ALFM…MLIT, GAAG…LFSL, GMIG…GGAF, WCFY…FFFL, FAAI…MFLF, SATV…FGLV, ALLV…YLPL, PILA…SAAA, LIPM…LINF, LIIY…APLV, TATF…QVLY, and SPMW…ILLV. Residues 559–580 form a disordered region; sequence KKAEAERKAERQAKDLEKAQKS.

Belongs to the major facilitator superfamily. TCR/Tet family.

It localises to the cell membrane. The protein localises to the vacuole membrane. Functionally, efflux pump; part of the gene cluster that mediates the biosynthesis of dothistromin (DOTH), a polyketide toxin very similar in structure to the aflatoxin precursor, versicolorin B. One function of dotC may be to transport early-stage dothistromin biosynthetic intermediates from the cytoplasm into vacuoles, thereby affecting the rate of dothistromin production. The polypeptide is Efflux pump dotC (Dothistroma septosporum (strain NZE10 / CBS 128990) (Red band needle blight fungus)).